The following is a 252-amino-acid chain: dITP/XTP pyrophosphatase (252 aa).

Residue 7-12 (THNEGK) participates in substrate binding. The Proton acceptor role is filled by Asp74. Residue Asp74 participates in Mg(2+) binding. Residues Ser75 and 193 to 196 (FGYD) contribute to the substrate site. Positions 201–224 (PDDQPAGRVSTEPDHEGEPLTSAE) are disordered. Substrate is bound by residues Lys230 and 235 to 236 (HR).

It belongs to the HAM1 NTPase family. Homodimer. Mg(2+) is required as a cofactor.

It catalyses the reaction XTP + H2O = XMP + diphosphate + H(+). The catalysed reaction is dITP + H2O = dIMP + diphosphate + H(+). It carries out the reaction ITP + H2O = IMP + diphosphate + H(+). Pyrophosphatase that catalyzes the hydrolysis of nucleoside triphosphates to their monophosphate derivatives, with a high preference for the non-canonical purine nucleotides XTP (xanthosine triphosphate), dITP (deoxyinosine triphosphate) and ITP. Seems to function as a house-cleaning enzyme that removes non-canonical purine nucleotides from the nucleotide pool, thus preventing their incorporation into DNA/RNA and avoiding chromosomal lesions. The sequence is that of dITP/XTP pyrophosphatase from Bifidobacterium longum subsp. infantis (strain ATCC 15697 / DSM 20088 / JCM 1222 / NCTC 11817 / S12).